Consider the following 255-residue polypeptide: Pimeloyl-[acyl-carrier protein] methyl ester esterase (255 aa).

The AB hydrolase-1 domain occupies 16–242; the sequence is LVLLHGWGLN…AAHAPFISHP (227 aa). Residues W22, 82 to 83, and 143 to 147 contribute to the substrate site; these read SL and FLALQ. S82 functions as the Nucleophile in the catalytic mechanism. Active-site residues include D207 and H235. H235 lines the substrate pocket.

It belongs to the AB hydrolase superfamily. Carboxylesterase BioH family. Monomer.

It localises to the cytoplasm. It carries out the reaction 6-carboxyhexanoyl-[ACP] methyl ester + H2O = 6-carboxyhexanoyl-[ACP] + methanol + H(+). It participates in cofactor biosynthesis; biotin biosynthesis. Functionally, the physiological role of BioH is to remove the methyl group introduced by BioC when the pimeloyl moiety is complete. It allows to synthesize pimeloyl-ACP via the fatty acid synthetic pathway through the hydrolysis of the ester bonds of pimeloyl-ACP esters. In Pectobacterium atrosepticum (strain SCRI 1043 / ATCC BAA-672) (Erwinia carotovora subsp. atroseptica), this protein is Pimeloyl-[acyl-carrier protein] methyl ester esterase.